Reading from the N-terminus, the 371-residue chain is Putative glutamate--cysteine ligase 2 (371 aa).

Belongs to the glutamate--cysteine ligase type 2 family. YbdK subfamily.

The enzyme catalyses L-cysteine + L-glutamate + ATP = gamma-L-glutamyl-L-cysteine + ADP + phosphate + H(+). Functionally, ATP-dependent carboxylate-amine ligase which exhibits weak glutamate--cysteine ligase activity. The polypeptide is Putative glutamate--cysteine ligase 2 (Burkholderia multivorans (strain ATCC 17616 / 249)).